Reading from the N-terminus, the 421-residue chain is Histidine--tRNA ligase (421 aa).

This sequence belongs to the class-II aminoacyl-tRNA synthetase family. As to quaternary structure, homodimer.

It localises to the cytoplasm. It carries out the reaction tRNA(His) + L-histidine + ATP = L-histidyl-tRNA(His) + AMP + diphosphate + H(+). In Solidesulfovibrio magneticus (strain ATCC 700980 / DSM 13731 / RS-1) (Desulfovibrio magneticus), this protein is Histidine--tRNA ligase.